We begin with the raw amino-acid sequence, 188 residues long: dCTP deaminase (188 aa).

DCTP-binding positions include 111–116, 135–137, Gln156, Tyr170, and Gln180; these read KSTYAR and TLE. Glu137 acts as the Proton donor/acceptor in catalysis.

Belongs to the dCTP deaminase family. In terms of assembly, homotrimer.

The catalysed reaction is dCTP + H2O + H(+) = dUTP + NH4(+). Its pathway is pyrimidine metabolism; dUMP biosynthesis; dUMP from dCTP (dUTP route): step 1/2. Catalyzes the deamination of dCTP to dUTP. In Pseudomonas putida (strain ATCC 700007 / DSM 6899 / JCM 31910 / BCRC 17059 / LMG 24140 / F1), this protein is dCTP deaminase.